The chain runs to 183 residues: Streptavidin-V1 (183 aa).

A signal peptide spans 1-24 (MRKIVVAAIAVSLTTVSITASASA). The Avidin-like domain maps to 37 to 159 (AEAGITGTWY…GHDTFTKVKP (123 aa)). Biotin is bound by residues Tyr67 and Tyr78. A Cell attachment site; atypical motif is present at residues 83-85 (RYD). Residues Trp116, Trp132, and Trp144 each coordinate biotin.

This sequence belongs to the avidin/streptavidin family. Homotetramer.

It is found in the secreted. In terms of biological role, the biological function of streptavidin is not known. Forms a strong non-covalent specific complex with biotin (one molecule of biotin per subunit of streptavidin). The sequence is that of Streptavidin-V1 from Streptomyces violaceus (Streptomyces venezuelae).